The following is a 336-amino-acid chain: Isopentenyl-diphosphate delta-isomerase (336 aa).

5 to 6 provides a ligand contact to substrate; that stretch reads RK. FMN contacts are provided by residues 60 to 62, Ser-90, and Asn-117; that span reads AMT. Residue Gln-147 participates in substrate binding. Mg(2+) is bound at residue Glu-148. FMN-binding positions include Lys-179, Ser-204, Thr-209, 253–255, and 274–275; these read GVR and SR.

Belongs to the IPP isomerase type 2 family. Homooctamer. Dimer of tetramers. FMN serves as cofactor. NADPH is required as a cofactor. Requires Mg(2+) as cofactor.

The protein resides in the cytoplasm. It carries out the reaction isopentenyl diphosphate = dimethylallyl diphosphate. In terms of biological role, involved in the biosynthesis of isoprenoids. Catalyzes the 1,3-allylic rearrangement of the homoallylic substrate isopentenyl (IPP) to its allylic isomer, dimethylallyl diphosphate (DMAPP). In Streptococcus pneumoniae (strain ATCC BAA-255 / R6), this protein is Isopentenyl-diphosphate delta-isomerase.